The sequence spans 828 residues: Auxin response factor 2B (828 aa).

Positions 128-230 form a DNA-binding region, TF-B3; sequence FCKTLTASDT…ELRVGVRRAM (103 aa). Disordered stretches follow at residues 348–397, 681–703, and 791–828; these read PDRV…GSSK, EQFQ…HSTR, and NPGT…PEDS. The span at 360-370 shows a compositional bias: pro residues; the sequence is LSPPALNPLPI. Polar residues predominate over residues 380–390; the sequence is VLPSSPDSSVL. Residues 703 to 786 form the PB1 domain; it reads RSCTKVHKQG…RKIFIYTKDE (84 aa). Residues 791–806 are compositionally biased toward polar residues; that stretch reads NPGTLNSKGEDNSSVA.

The protein belongs to the ARF family. As to quaternary structure, homodimers and heterodimers. As to expression, expressed in root, leaf and stem. Also expressed in flower and fruit. Expressed in flower buds about three days before opening including stamen, petal and sepal with the highest in ovary.

The protein resides in the nucleus. Auxin response factors (ARFs) are transcriptional factors that binds specifically to the DNA sequence 5'-TGTCTC-3' found in the auxin-responsive promoter elements (AuxREs). Could act as transcriptional activator or repressor. Involved in the control of fruit ripening process. Regulates expression of a number of ripening regulators, transcription factors, and ethylene biosynthesis and signaling components. May act as a transcriptional repressor of auxin-responsive genes. The protein is Auxin response factor 2B of Solanum lycopersicum (Tomato).